The sequence spans 344 residues: Inositol 2-dehydrogenase/D-chiro-inositol 3-dehydrogenase (344 aa).

Belongs to the Gfo/Idh/MocA family. As to quaternary structure, homotetramer.

It carries out the reaction myo-inositol + NAD(+) = scyllo-inosose + NADH + H(+). The catalysed reaction is 1D-chiro-inositol + NAD(+) = scyllo-inosine + NADH + H(+). It participates in polyol metabolism; myo-inositol degradation into acetyl-CoA; acetyl-CoA from myo-inositol: step 1/7. Involved in the oxidation of myo-inositol (MI) and D-chiro-inositol (DCI) to 2-keto-myo-inositol (2KMI or 2-inosose) and 1-keto-D-chiro-inositol (1KDCI), respectively. This chain is Inositol 2-dehydrogenase/D-chiro-inositol 3-dehydrogenase, found in Bacillus licheniformis (strain ATCC 14580 / DSM 13 / JCM 2505 / CCUG 7422 / NBRC 12200 / NCIMB 9375 / NCTC 10341 / NRRL NRS-1264 / Gibson 46).